The sequence spans 351 residues: MEKKNYSALFENLQNRSNPEKLQEITTKFFSDNPDVKYNDVLKYITLAMNGVSPEYTNKSREAGEKVKLHLQDILLDVEYQYQGSVMTNTHIKGYSDIDLLVISDKFYTLDERNIIENLEVNKFSLSQEKIQKLQQELLGKKYHSATNDLKNNRLLSEQKLSSVYEICDITHPKAIKITNKSMGRDVDIVIANWYDDAQSVINNRQIEYRGIQIYNKRSNTIENRDFPFLSIQRINKRSSETKGRLKKMIRFLKNLKADSDEKIELSSFDINAICYNIEKNKYLHSNKYQLVPILYEQLNELVSNSNKINSLKSVDGHEYIFSRNNIDKKESLKMLLQEVKIIYSNLQSYL.

The protein belongs to the CD-NTase family. E05 subfamily.

It carries out the reaction 2 GTP = 3',3'-c-di-GMP + 2 diphosphate. Its function is as follows. Cyclic nucleotide synthase (second messenger synthase) of a CBASS antivirus system. CBASS (cyclic oligonucleotide-based antiphage signaling system) provides immunity against bacteriophage. The CD-NTase protein synthesizes cyclic nucleotides in response to infection; these serve as specific second messenger signals. The signals activate a diverse range of effectors, leading to bacterial cell death and thus abortive phage infection. A type I-D(GG) CBASS system. Cyclic dinucleotide synthase that catalyzes the synthesis of c-di-GMP, has no activity with other NTP substrates. This is c-di-GMP synthase (cdnE) from Capnocytophaga granulosa (strain ATCC 51502 / DSM 11449 / JCM 8566 / LMG 16022 / NCTC 12948 / B0611).